A 398-amino-acid polypeptide reads, in one-letter code: 4-hydroxy-3-methylbut-2-enyl diphosphate reductase (398 aa).

Cys-66 contacts [4Fe-4S] cluster. Residue His-96 coordinates (2E)-4-hydroxy-3-methylbut-2-enyl diphosphate. His-96 serves as a coordination point for dimethylallyl diphosphate. Residue His-96 coordinates isopentenyl diphosphate. [4Fe-4S] cluster is bound at residue Cys-157. His-185 lines the (2E)-4-hydroxy-3-methylbut-2-enyl diphosphate pocket. Residue His-185 participates in dimethylallyl diphosphate binding. His-185 contributes to the isopentenyl diphosphate binding site. The active-site Proton donor is Glu-187. (2E)-4-hydroxy-3-methylbut-2-enyl diphosphate is bound at residue Thr-250. Cys-288 is a binding site for [4Fe-4S] cluster. 4 residues coordinate (2E)-4-hydroxy-3-methylbut-2-enyl diphosphate: Ser-317, Ser-318, Asn-319, and Ser-379. Residues Ser-317, Ser-318, Asn-319, and Ser-379 each contribute to the dimethylallyl diphosphate site. Isopentenyl diphosphate-binding residues include Ser-317, Ser-318, Asn-319, and Ser-379.

The protein belongs to the IspH family. The cofactor is [4Fe-4S] cluster.

The catalysed reaction is isopentenyl diphosphate + 2 oxidized [2Fe-2S]-[ferredoxin] + H2O = (2E)-4-hydroxy-3-methylbut-2-enyl diphosphate + 2 reduced [2Fe-2S]-[ferredoxin] + 2 H(+). It catalyses the reaction dimethylallyl diphosphate + 2 oxidized [2Fe-2S]-[ferredoxin] + H2O = (2E)-4-hydroxy-3-methylbut-2-enyl diphosphate + 2 reduced [2Fe-2S]-[ferredoxin] + 2 H(+). It functions in the pathway isoprenoid biosynthesis; dimethylallyl diphosphate biosynthesis; dimethylallyl diphosphate from (2E)-4-hydroxy-3-methylbutenyl diphosphate: step 1/1. Its pathway is isoprenoid biosynthesis; isopentenyl diphosphate biosynthesis via DXP pathway; isopentenyl diphosphate from 1-deoxy-D-xylulose 5-phosphate: step 6/6. Catalyzes the conversion of 1-hydroxy-2-methyl-2-(E)-butenyl 4-diphosphate (HMBPP) into a mixture of isopentenyl diphosphate (IPP) and dimethylallyl diphosphate (DMAPP). Acts in the terminal step of the DOXP/MEP pathway for isoprenoid precursor biosynthesis. This chain is 4-hydroxy-3-methylbut-2-enyl diphosphate reductase, found in Synechococcus sp. (strain CC9311).